Reading from the N-terminus, the 318-residue chain is Protein disulfide-isomerase MPD1 (318 aa).

Positions methionine 1–alanine 21 are cleaved as a signal peptide. Residues glutamine 22–lysine 158 enclose the Thioredoxin domain. A glycan (N-linked (GlcNAc...) asparagine) is linked at asparagine 47. Cysteine 59 and cysteine 62 are joined by a disulfide. N-linked (GlcNAc...) asparagine glycosylation is present at asparagine 307. The short motif at histidine 315–leucine 318 is the Prevents secretion from ER element.

Belongs to the protein disulfide isomerase family. Interacts with CNE1 and EPS1.

The protein localises to the endoplasmic reticulum lumen. It carries out the reaction Catalyzes the rearrangement of -S-S- bonds in proteins.. Participates in the folding of proteins containing disulfide bonds. In Saccharomyces cerevisiae (strain ATCC 204508 / S288c) (Baker's yeast), this protein is Protein disulfide-isomerase MPD1 (MPD1).